The sequence spans 331 residues: High-affinity nickel-transport protein NixA (331 aa).

Helical transmembrane passes span 3 to 23, 77 to 97, 110 to 130, 184 to 204, 213 to 233, 259 to 279, and 302 to 322; these read LWFP…ALLF, MGHS…IAWA, VVGT…NAII, PVGF…LLAL, VVGM…FDTL, ITAL…FQVI, and DLGY…FFLW.

It belongs to the NiCoT transporter (TC 2.A.52) family.

The protein resides in the cell inner membrane. Functionally, high-affinity nickel intake protein. Imports nickel ions in an energy-dependent fashion. Necessary for the expression of catalytically active urease. The chain is High-affinity nickel-transport protein NixA (nixA) from Helicobacter pylori (strain J99 / ATCC 700824) (Campylobacter pylori J99).